The following is a 245-amino-acid chain: Polyhedrin (245 aa).

The segment at lysine 32 to lysine 35 is nuclear localization signal.

Belongs to the polyhedrin family.

It localises to the host nucleus. Its function is as follows. Major component of the virus occlusion bodies which are large proteinaceous structures termed polyhedra. These structures serve as the protective package for the virus particles outside the infected host and allow natural transmission of virus between insect hosts, assisting persistence in the environment. Forms the paracrystalline lattice of polyhedra and interacts with enveloped virions as well as other accessory molecules and structures to form a mature viral occlusion body. The polypeptide is Polyhedrin (PH) (Lepidoptera (butterflies and moths)).